A 490-amino-acid polypeptide reads, in one-letter code: UDP-glucosyl transferase 73M2 (490 aa).

Catalysis depends on histidine 20, which acts as the Proton acceptor. Aspartate 124 acts as the Charge relay in catalysis. Residues serine 297, tryptophan 353, alanine 354, histidine 371, asparagine 375, serine 376, glutamate 379, and tyrosine 393 each contribute to the UDP site.

It belongs to the UDP-glycosyltransferase family. In terms of tissue distribution, mainly expressed in flowers, flower buds and young leaves, and, to a lesser extent, in old leaves, stems and roots.

It functions in the pathway secondary metabolite biosynthesis; terpenoid biosynthesis. Functionally, component of the oleanane-type triterpene saponins (e.g. saponarioside A and saponarioside B) biosynthetic pathway, leading to the production of natural products with detergent properties used as traditional sources of soap. A glycosyltransferase that mediates the conversion of QA-triFRX to QA-triFRXX via the elongation of the C-28 sugar chain with a D-xylose. In Saponaria officinalis (Common soapwort), this protein is UDP-glucosyl transferase 73M2.